The primary structure comprises 456 residues: Maturase-like protein 1 (456 aa).

It to group II intron maturases.

It is found in the plastid. In terms of biological role, could be required for group III intron excision. The polypeptide is Maturase-like protein 1 (mat1) (Euglena longa (Euglenophycean alga)).